A 616-amino-acid chain; its full sequence is Dihydroxy-acid dehydratase (616 aa).

Residue Asp-81 participates in Mg(2+) binding. A [2Fe-2S] cluster-binding site is contributed by Cys-122. Positions 123 and 124 each coordinate Mg(2+). N6-carboxylysine is present on Lys-124. Cys-195 provides a ligand contact to [2Fe-2S] cluster. Glu-491 contributes to the Mg(2+) binding site. Ser-517 (proton acceptor) is an active-site residue.

It belongs to the IlvD/Edd family. In terms of assembly, homodimer. [2Fe-2S] cluster serves as cofactor. It depends on Mg(2+) as a cofactor.

It catalyses the reaction (2R)-2,3-dihydroxy-3-methylbutanoate = 3-methyl-2-oxobutanoate + H2O. The catalysed reaction is (2R,3R)-2,3-dihydroxy-3-methylpentanoate = (S)-3-methyl-2-oxopentanoate + H2O. Its pathway is amino-acid biosynthesis; L-isoleucine biosynthesis; L-isoleucine from 2-oxobutanoate: step 3/4. It functions in the pathway amino-acid biosynthesis; L-valine biosynthesis; L-valine from pyruvate: step 3/4. Functionally, functions in the biosynthesis of branched-chain amino acids. Catalyzes the dehydration of (2R,3R)-2,3-dihydroxy-3-methylpentanoate (2,3-dihydroxy-3-methylvalerate) into 2-oxo-3-methylpentanoate (2-oxo-3-methylvalerate) and of (2R)-2,3-dihydroxy-3-methylbutanoate (2,3-dihydroxyisovalerate) into 2-oxo-3-methylbutanoate (2-oxoisovalerate), the penultimate precursor to L-isoleucine and L-valine, respectively. The protein is Dihydroxy-acid dehydratase of Serratia proteamaculans (strain 568).